Here is a 1711-residue protein sequence, read N- to C-terminus: Nuclear pore complex protein Nup214 (1711 aa).

Tandem repeats lie at residues 472 to 473 (FG), 486 to 487 (FG), 497 to 498 (FG), 511 to 512 (FG), 514 to 515 (FG), 535 to 536 (FG), 588 to 589 (TS), and 598 to 599 (SL). The interval 472–1703 (FGAAAAKAPA…NSNAQKPAFG (1232 aa)) is 45 X 2 AA repeats of F-G. Leucine-zipper stretches follow at residues 650-672 (LDDL…VQGL) and 767-788 (LTRL…KSKL). The tract at residues 886–905 (KPATANKYTQAAVAPPSPPD) is disordered. Residues 1009–1010 (FG) form repeat 9. A disordered region spans residues 1012–1081 (GSPAVAAPTP…NKSFGFGGFT (70 aa)). Composition is skewed to basic and acidic residues over residues 1037 to 1051 (TKPK…KEFK) and 1058 to 1072 (EESK…ETEN). The interval 1044–1711 (AAESKEFKAV…FGGSSFMNYR (668 aa)) is interaction with emb. Tandem repeats lie at residues 1075–1076 (FG), 1077–1078 (FG), 1097–1098 (FG), 1106–1107 (FG), 1135–1136 (FG), 1218–1219 (FG), 1229–1230 (FG), and 1240–1241 (FG). Residues 1251 to 1261 (TSVTEANNKTD) show a composition bias toward polar residues. Positions 1251–1270 (TSVTEANNKTDPISTTPSAI) are disordered. 27 consecutive repeat copies span residues 1356 to 1357 (FG), 1388 to 1389 (FG), 1399 to 1400 (FG), 1434 to 1435 (FG), 1449 to 1450 (FG), 1458 to 1459 (FG), 1472 to 1473 (FG), 1481 to 1482 (FG), 1487 to 1488 (FG), 1507 to 1508 (FG), 1512 to 1513 (FG), 1539 to 1540 (FG), 1547 to 1548 (FG), 1562 to 1563 (FG), 1571 to 1572 (FG), 1584 to 1585 (FG), 1588 to 1589 (FG), 1601 to 1602 (FG), 1617 to 1618 (FG), 1623 to 1624 (FG), 1629 to 1630 (FG), 1635 to 1636 (FG), 1641 to 1642 (FG), 1647 to 1648 (FG), 1650 to 1651 (FG), 1662 to 1663 (FG), and 1686 to 1687 (FG). 2 disordered regions span residues 1533–1552 (SPQA…SPAT) and 1557–1614 (SGGS…TTTP). Gly residues-rich tracts occupy residues 1560 to 1572 (SIFG…GGFG) and 1582 to 1595 (GGFG…GGGS). The segment covering 1596–1614 (VAQTGFGSPQAPQQQTTTP) has biased composition (low complexity). A compositionally biased stretch (polar residues) spans 1688–1698 (NLAQTGNSNAQ). The interval 1688-1711 (NLAQTGNSNAQKPAFGGSSFMNYR) is disordered. Copy 45 of the repeat occupies 1702–1703 (FG).

In terms of assembly, component of the nuclear pore complex. Interacts with mbo/Nup88 and (via C-terminus) with emb to attenuate emb-mediated protein export.

The protein localises to the nucleus. Its subcellular location is the nuclear pore complex. The protein resides in the nucleus membrane. In terms of biological role, part of the nuclear pore complex. Serves as a docking site in the receptor-mediated import of substrates across the nuclear pore complex including emb, RanGAP and phosphorylated Mad. Protects mbo/Nup88 from proteasomal degradation at the nuclear pore. Together with mbo/Nup88, sequesters emb in the cytoplasm and thereby attenuates nuclear export signal (NES)-mediated nuclear export. Together with mbo/Nup88, required for the nuclear import of the Rel family transcription factors dorsal (dl) and Dorsal-related immunity factor (Dif) and the activation of an immune response. This Drosophila melanogaster (Fruit fly) protein is Nuclear pore complex protein Nup214.